We begin with the raw amino-acid sequence, 526 residues long: Beta,beta-carotene 15,15'-dioxygenase (526 aa).

Fe cation-binding residues include H172, H236, H307, and H512.

Belongs to the carotenoid oxygenase family. Fe(2+) is required as a cofactor.

The protein localises to the cytoplasm. The protein resides in the cytosol. The enzyme catalyses all-trans-beta-carotene + O2 = 2 all-trans-retinal. The protein operates within cofactor metabolism; retinol metabolism. Functionally, symmetrically cleaves beta-carotene into two molecules of retinal using a dioxygenase mechanism. This Gallus gallus (Chicken) protein is Beta,beta-carotene 15,15'-dioxygenase.